The sequence spans 281 residues: NADPH-dependent 7-cyano-7-deazaguanine reductase (281 aa).

87–89 contacts substrate; sequence IES. Residue 89–90 coordinates NADPH; sequence SK. The Thioimide intermediate role is filled by cysteine 188. Aspartate 195 functions as the Proton donor in the catalytic mechanism. 227-228 contacts substrate; sequence HE. 256-257 provides a ligand contact to NADPH; it reads RG. Residues 261 to 281 form a disordered region; the sequence is INPYRSTEQDKPAHNNRMARQ.

The protein belongs to the GTP cyclohydrolase I family. QueF type 2 subfamily. Homodimer.

It localises to the cytoplasm. The enzyme catalyses 7-aminomethyl-7-carbaguanine + 2 NADP(+) = 7-cyano-7-deazaguanine + 2 NADPH + 3 H(+). It participates in tRNA modification; tRNA-queuosine biosynthesis. In terms of biological role, catalyzes the NADPH-dependent reduction of 7-cyano-7-deazaguanine (preQ0) to 7-aminomethyl-7-deazaguanine (preQ1). The protein is NADPH-dependent 7-cyano-7-deazaguanine reductase of Vibrio campbellii (strain ATCC BAA-1116).